Reading from the N-terminus, the 312-residue chain is Lipoyl synthase (312 aa).

Positions 51, 56, 62, 77, 81, 84, and 290 each coordinate [4Fe-4S] cluster. A Radical SAM core domain is found at 63-280; sequence WSRKTATYLA…RTIGTSLGLF (218 aa).

Belongs to the radical SAM superfamily. Lipoyl synthase family. [4Fe-4S] cluster serves as cofactor.

The protein localises to the cytoplasm. It carries out the reaction [[Fe-S] cluster scaffold protein carrying a second [4Fe-4S](2+) cluster] + N(6)-octanoyl-L-lysyl-[protein] + 2 oxidized [2Fe-2S]-[ferredoxin] + 2 S-adenosyl-L-methionine + 4 H(+) = [[Fe-S] cluster scaffold protein] + N(6)-[(R)-dihydrolipoyl]-L-lysyl-[protein] + 4 Fe(3+) + 2 hydrogen sulfide + 2 5'-deoxyadenosine + 2 L-methionine + 2 reduced [2Fe-2S]-[ferredoxin]. It participates in protein modification; protein lipoylation via endogenous pathway; protein N(6)-(lipoyl)lysine from octanoyl-[acyl-carrier-protein]: step 2/2. Catalyzes the radical-mediated insertion of two sulfur atoms into the C-6 and C-8 positions of the octanoyl moiety bound to the lipoyl domains of lipoate-dependent enzymes, thereby converting the octanoylated domains into lipoylated derivatives. The chain is Lipoyl synthase from Chlamydia caviae (strain ATCC VR-813 / DSM 19441 / 03DC25 / GPIC) (Chlamydophila caviae).